The following is a 574-amino-acid chain: Aspartate--tRNA ligase (574 aa).

An L-aspartate-binding site is contributed by Glu169. The segment at 193 to 196 is aspartate; that stretch reads QLFK. An L-aspartate-binding site is contributed by Arg215. ATP contacts are provided by residues 215-217 and Gln224; that span reads RDE. His437 provides a ligand contact to L-aspartate. Residue Glu471 coordinates ATP. Arg478 is an L-aspartate binding site. Position 523–526 (523–526) interacts with ATP; it reads GLDR.

It belongs to the class-II aminoacyl-tRNA synthetase family. Type 1 subfamily. In terms of assembly, homodimer.

The protein resides in the cytoplasm. It catalyses the reaction tRNA(Asp) + L-aspartate + ATP = L-aspartyl-tRNA(Asp) + AMP + diphosphate. Functionally, catalyzes the attachment of L-aspartate to tRNA(Asp) in a two-step reaction: L-aspartate is first activated by ATP to form Asp-AMP and then transferred to the acceptor end of tRNA(Asp). The polypeptide is Aspartate--tRNA ligase (Mycoplasma mycoides subsp. mycoides SC (strain CCUG 32753 / NCTC 10114 / PG1)).